We begin with the raw amino-acid sequence, 251 residues long: MAAHLLIVDALNLIRRIHAVQGSPCVETCQHALDQLIIHSQPTHAVAVFDDDARSSGWRHQRLPDYKAGRPPMPDDLHNEMPALRAAFEQRGVRCWASDGNEADDLAATLALKVTEAGHQATIVSTDKGYCQLLSPGLRIRDYFQKRWLDAPFIEKEFGVLPRQLPDYWGLAGISSSKVPGVAGIGPKSATQLLIQFQNLEGIYAHLDKVPEKWRKKLETHKEMAFLCRDIARLQTDLHIDGNLQQLRLAR.

Asp-104 lines the Mg(2+) pocket. The 90-residue stretch at 160 to 249 (VLPRQLPDYW…IDGNLQQLRL (90 aa)) folds into the 5'-3' exonuclease domain. Positions 171, 172, 180, 182, and 185 each coordinate K(+). Residues 184–189 (GIGPKS) are interaction with DNA.

It belongs to the Xni family. It depends on Mg(2+) as a cofactor. The cofactor is K(+).

Functionally, has flap endonuclease activity. During DNA replication, flap endonucleases cleave the 5'-overhanging flap structure that is generated by displacement synthesis when DNA polymerase encounters the 5'-end of a downstream Okazaki fragment. In Salmonella choleraesuis (strain SC-B67), this protein is Flap endonuclease Xni.